Here is a 246-residue protein sequence, read N- to C-terminus: Protein DEHYDRATION-INDUCED 19 homolog 3 (246 aa).

A disordered region spans residues 185–230 (ERSKAPVPIPDDTSIHKDTPAQPWESRIDSSLTSEEREQKRKQATD). Residues 218-229 (SEEREQKRKQAT) show a composition bias toward basic and acidic residues.

This sequence belongs to the Di19 family.

The polypeptide is Protein DEHYDRATION-INDUCED 19 homolog 3 (DI19-3) (Oryza sativa subsp. japonica (Rice)).